We begin with the raw amino-acid sequence, 691 residues long: CREB-regulated transcription coactivator 2 (691 aa).

Residues 1–20 (MATSGANGPGSATASASNPR) are compositionally biased toward polar residues. Residues 1 to 30 (MATSGANGPGSATASASNPRKFSEKIALQK) form a disordered region. Position 2 is an N-acetylalanine (Ala2). Arg51 is subject to Asymmetric dimethylarginine; by PRMT6. Phosphoserine occurs at positions 70, 86, and 90. Residues Arg99, Arg120, and Arg123 each carry the asymmetric dimethylarginine; by PRMT6 modification. Position 136 is a phosphoserine (Ser136). 2 positions are modified to asymmetric dimethylarginine; by PRMT6: Arg161 and Arg168. The residue at position 169 (Thr169) is a Phosphothreonine. At Ser171 the chain carries Phosphoserine; by AMPK, MARK2, SIK1 and SIK2. The span at 174-186 (ALHTSVMNPNPQD) shows a compositional bias: polar residues. Positions 174–195 (ALHTSVMNPNPQDTYPGPTPPS) are disordered. Thr192 is subject to Phosphothreonine. Residue Lys234 forms a Glycyl lysine isopeptide (Lys-Gly) (interchain with G-Cter in SUMO2) linkage. The Nuclear export signal motif lies at 271–287 (TGGSLPDLTNLHFPPPL). Ser274 bears the Phosphoserine; by MARK2 mark. 2 disordered regions span residues 280–306 (NLHF…GGNS) and 335–491 (HSPL…YSPP). Phosphoserine occurs at positions 306, 368, 393, 433, and 456. Composition is skewed to low complexity over residues 335 to 383 (HSPL…HALP) and 390 to 411 (PSLS…SPVL). A compositionally biased stretch (polar residues) spans 447-468 (SQQQLPKQFSPTMSPTLSSITQ). At Tyr488 the chain carries Phosphotyrosine. Phosphoserine is present on residues Ser489 and Ser492. Thr501 is subject to Phosphothreonine. Positions 513–543 (CLVQPSGGQPPGRQPHYGTLYPPGSSGHGQQ) are disordered. Residues Ser611, Ser621, and Ser622 each carry the phosphoserine modification.

The protein belongs to the TORC family. As to quaternary structure, binds, as a tetramer, through its N-terminal region, with the bZIP domain of CREB1. 'Arg-314' in the bZIP domain of CREB1 is essential for this interaction. Interaction, via its C-terminal, with TAF4, enhances recruitment of TAF4 to CREB1. Interacts with SIK2. Interacts with 14-3-3 proteins, YWHAB and YWHAG. Interacts (probably when phosphorylated at Ser-171) with YWHAE. Interacts with calmodulin-dependent catalytic subunit PPP3CA/calcineurin A. Interaction with COP1 mediates nuclear export and degradation of CRTC2. In terms of processing, phosphorylation/dephosphorylation states of Ser-171 are required for regulating transduction of CREB activity. CRTCs/TORCs are inactive when phosphorylated, and active when dephosphorylated at this site. This primary site of phosphorylation, is regulated by cAMP and calcium levels and is dependent on the phosphorylation of SIKs (SIK1 and SIK2) by LKB1. Following adenylyl cyclase activation, dephosphorylated at Ser-171 by PPP3CA/calcineurin A resulting in CRTC2 dissociation from 14-3-3 proteins and PPP3CA. Both insulin and AMPK increase this phosphorylation of CRTC2 while glucagon suppresses it. Phosphorylation at Ser-274 by MARK2 is induced under low glucose conditions and dephosphorylated in response to glucose influx. Phosphorylation at Ser-274 promotes interaction with 14-3-3 proteins and translocation to the cytoplasm. Asymmetric dimethylation of arginine resisues by PRMT6 enhances the association of CRTC2 with CREB on the promoters of gluconeogenic genes.

Its subcellular location is the cytoplasm. It is found in the nucleus. Functionally, transcriptional coactivator for CREB1 which activates transcription through both consensus and variant cAMP response element (CRE) sites. Acts as a coactivator, in the SIK/TORC signaling pathway, being active when dephosphorylated and acts independently of CREB1 'Ser-133' phosphorylation. Enhances the interaction of CREB1 with TAF4. Regulates gluconeogenesis as a component of the LKB1/AMPK/TORC2 signaling pathway. Regulates the expression of specific genes such as the steroidogenic gene, StAR. Potent coactivator of PPARGC1A and inducer of mitochondrial biogenesis in muscle cells. This is CREB-regulated transcription coactivator 2 (Crtc2) from Rattus norvegicus (Rat).